Here is a 1057-residue protein sequence, read N- to C-terminus: Probable sucrose-phosphate synthase 1 (1057 aa).

Over residues 103–115 the composition is skewed to basic and acidic residues; that stretch reads RRLERERGRREAT. 3 disordered regions span residues 103–143, 439–459, and 670–693; these read RRLE…STRS, PQDG…ASPD, and RHPQ…GDSL. Residues 442–452 are compositionally biased toward acidic residues; the sequence is GDMDGETEGNE.

Belongs to the glycosyltransferase 1 family. As to quaternary structure, homodimer or homotetramer.

The enzyme catalyses beta-D-fructose 6-phosphate + UDP-alpha-D-glucose = sucrose 6(F)-phosphate + UDP + H(+). Its pathway is glycan biosynthesis; sucrose biosynthesis; sucrose from D-fructose 6-phosphate and UDP-alpha-D-glucose: step 1/2. With respect to regulation, activity is regulated by phosphorylation and moderated by concentration of metabolites and light. Functionally, plays a role in photosynthetic sucrose synthesis by catalyzing the rate-limiting step of sucrose biosynthesis from UDP-glucose and fructose- 6-phosphate. Involved in the regulation of carbon partitioning in the leaves of plants. May regulate the synthesis of sucrose and therefore play a major role as a limiting factor in the export of photoassimilates out of the leaf. Plays a role for sucrose availability that is essential for plant growth and fiber elongation. In Citrus unshiu (Satsuma mandarin), this protein is Probable sucrose-phosphate synthase 1 (SPS1).